The primary structure comprises 258 residues: MLLAMDIGNTNTVLGLFNEQRLVHDWRIRTEVNTTVDEYGIAIRSLFDAHGFFVADVGSVIISCVVPPVLNSIERFCRKYFNIQPIIVGPGIRTGMPIFYDNPKEVGADRIVNAVAAYDYYRCATIVVDFGTATTFDYISDKGEYMGGVISPGIMISCEALFFKTSKLPRVEIFARPPSVLAKNTIASMNAGIVYGYAGLVEGIITRMRNEIGTNLKVVATGGLAALIASECSLIDDVDDYLTLKGLRIIFERNKKNP.

6-13 (DIGNTNTV) lines the ATP pocket. Substrate-binding positions include Tyr-100 and 107-110 (GADR). The Proton acceptor role is filled by Asp-109. Asp-129 serves as a coordination point for K(+). Residue Thr-132 coordinates ATP. Thr-185 lines the substrate pocket.

This sequence belongs to the type III pantothenate kinase family. In terms of assembly, homodimer. The cofactor is NH4(+). K(+) is required as a cofactor.

The protein localises to the cytoplasm. It catalyses the reaction (R)-pantothenate + ATP = (R)-4'-phosphopantothenate + ADP + H(+). The protein operates within cofactor biosynthesis; coenzyme A biosynthesis; CoA from (R)-pantothenate: step 1/5. In terms of biological role, catalyzes the phosphorylation of pantothenate (Pan), the first step in CoA biosynthesis. In Syntrophobacter fumaroxidans (strain DSM 10017 / MPOB), this protein is Type III pantothenate kinase.